A 111-amino-acid chain; its full sequence is Cytochrome c6-like (111 aa).

The N-terminal stretch at 1–25 (MQKFLKLVLVTFLFLISTLTPPANA) is a signal peptide. Heme c contacts are provided by cysteine 39, cysteine 42, histidine 43, and methionine 83.

Belongs to the cytochrome c family. PetJ subfamily. Binds 1 heme c group covalently per subunit.

The protein localises to the cellular thylakoid lumen. The sequence is that of Cytochrome c6-like from Nostoc sp. (strain PCC 7120 / SAG 25.82 / UTEX 2576).